A 192-amino-acid chain; its full sequence is Large ribosomal subunit protein bL25 (192 aa).

Belongs to the bacterial ribosomal protein bL25 family. CTC subfamily. In terms of assembly, part of the 50S ribosomal subunit; part of the 5S rRNA/L5/L18/L25 subcomplex. Contacts the 5S rRNA. Binds to the 5S rRNA independently of L5 and L18.

Functionally, this is one of the proteins that binds to the 5S RNA in the ribosome where it forms part of the central protuberance. In Marinomonas sp. (strain MWYL1), this protein is Large ribosomal subunit protein bL25.